A 382-amino-acid polypeptide reads, in one-letter code: MSAPESSPSTFYTVPTKHILSKAHLAAFQRSKTHSDIFNFIEELNEDIVGKKLTEAGQGSERTRPLISILDSVREIAESTPPVDNKLSRFGNPAFKTFYDKVGDASLELHKRIPGLPEEAIQEVEVYFKESWGNKQRVDYGSGMELNFLSWLLCLAKLGVVTKEDYPFLVLGVFWRYIEVMRYLQSTYWLEPAGSHGVWGLDDYHFLPFLWGSGQLRNHKYLRPKAIHDPEILGEFSKDYMYLSCIEFINSIKTASLRWHSPMLDDISAVKTWEKVNQGMKKMFVAEVLGKLPVMQHALFGSLLPFPTPEEDPELKRALEEEDGQSATDMHGHIHDPSEKGWSMDCCGIPVPSAFAAAQDANSHKGVPTLGNRPGIKPIPFD.

The tract at residues 363-382 (SHKGVPTLGNRPGIKPIPFD) is disordered.

It belongs to the PTPA-type PPIase family.

It localises to the cytoplasm. It catalyses the reaction [protein]-peptidylproline (omega=180) = [protein]-peptidylproline (omega=0). Its function is as follows. PPIases accelerate the folding of proteins. It catalyzes the cis-trans isomerization of proline imidic peptide bonds in oligopeptides. Acts as a regulatory subunit for PP2A-like phosphatases modulating their activity or substrate specificity, probably by inducing a conformational change in the catalytic subunit, a direct target of the PPIase. Can reactivate inactive phosphatase PP2A-phosphatase methylesterase complexes (PP2Ai) in presence of ATP and Mg(2+) by dissociating the inactive form from the complex. This Cryptococcus neoformans var. neoformans serotype D (strain B-3501A) (Filobasidiella neoformans) protein is Serine/threonine-protein phosphatase 2A activator 2 (RRD2).